Consider the following 84-residue polypeptide: uncharacterized protein (84 aa).

The segment at 62 to 84 (GYATKKDTMRMSAQKRTTKRLKP) is disordered.

This is an uncharacterized protein from Soybean chlorotic mottle virus.